Consider the following 626-residue polypeptide: Chaperone protein HtpG (626 aa).

Positions 1–331 are a; substrate-binding; the sequence is MSETVERHEF…TDDLPLNVSR (331 aa). A b region spans residues 332–544; sequence EMLQSTPTLQ…GMGPDLQMQR (213 aa). Positions 545 to 626 are c; it reads LLRRAGRGFG…GTVAKPAESA (82 aa).

This sequence belongs to the heat shock protein 90 family. As to quaternary structure, homodimer.

Its subcellular location is the cytoplasm. Its function is as follows. Molecular chaperone. Has ATPase activity. The polypeptide is Chaperone protein HtpG (Methylorubrum populi (strain ATCC BAA-705 / NCIMB 13946 / BJ001) (Methylobacterium populi)).